The primary structure comprises 757 residues: Protein transport protein SEC23-2 (757 aa).

4 residues coordinate Zn(2+): Cys-56, Cys-61, Cys-80, and Cys-83.

Belongs to the SEC23/SEC24 family. SEC23 subfamily. In terms of assembly, the COPII coat is composed of at least 5 proteins: the SEC23/24 complex, the SEC13/31 complex, and the protein SAR1.

The protein localises to the cytoplasm. It is found in the cytoplasmic vesicle. The protein resides in the COPII-coated vesicle membrane. It localises to the endoplasmic reticulum membrane. Its subcellular location is the golgi apparatus membrane. Component of the coat protein complex II (COPII) which promotes the formation of transport vesicles from the endoplasmic reticulum (ER). The coat has two main functions, the physical deformation of the endoplasmic reticulum membrane into vesicles and the selection of cargo molecules. The protein is Protein transport protein SEC23-2 (SEC232) of Candida glabrata (strain ATCC 2001 / BCRC 20586 / JCM 3761 / NBRC 0622 / NRRL Y-65 / CBS 138) (Yeast).